The following is a 205-amino-acid chain: HTH-type transcriptional regulator LuxR (205 aa).

The HTH tetR-type domain maps to 15-75; sequence LKRKQQLMEI…EVLNHVVRQF (61 aa). The segment at residues 39–58 is a DNA-binding region (H-T-H motif); the sequence is HADIAEIAQVSVATVFNYFP.

Functionally, regulatory protein of bacterial bioluminescence. It probably binds the autoinducer molecule and potentiates the transcription of the bioluminescence operon. The sequence is that of HTH-type transcriptional regulator LuxR (luxR) from Vibrio harveyi (Beneckea harveyi).